Reading from the N-terminus, the 159-residue chain is Ribosome maturation factor RimP (159 aa).

Belongs to the RimP family.

Its subcellular location is the cytoplasm. Its function is as follows. Required for maturation of 30S ribosomal subunits. In Streptococcus pneumoniae serotype 19F (strain G54), this protein is Ribosome maturation factor RimP.